Here is a 206-residue protein sequence, read N- to C-terminus: Large ribosomal subunit protein mL62 (206 aa).

The N-terminal 29 residues, 1–29 (MAATRCLRWGLSRAGVWLLPPPARCPRRA), are a transit peptide targeting the mitochondrion. Residue Gln90 is modified to N5-methylglutamine.

Belongs to the prokaryotic/mitochondrial release factor family. Mitochondrion-specific ribosomal protein mL62 subfamily. As to quaternary structure, component of the mitochondrial large ribosomal subunit (mt-LSU). Mature mammalian 55S mitochondrial ribosomes consist of a small (28S) and a large (39S) subunit. The 28S small subunit contains a 12S ribosomal RNA (12S mt-rRNA) and 30 different proteins. The 39S large subunit contains a 16S rRNA (16S mt-rRNA), a copy of mitochondrial valine transfer RNA (mt-tRNA(Val)), which plays an integral structural role, and 52 different proteins. In terms of processing, methylation of glutamine in the GGQ triplet by HEMK1. As to expression, down-regulated during the in vitro differentiation of HT29-D4 colon carcinoma cells.

It localises to the mitochondrion. It catalyses the reaction an N-acyl-L-alpha-aminoacyl-tRNA + H2O = an N-acyl-L-amino acid + a tRNA + H(+). Essential peptidyl-tRNA hydrolase component of the mitochondrial large ribosomal subunit. Acts as a codon-independent translation release factor that has lost all stop codon specificity and directs the termination of translation in mitochondrion, possibly in case of abortive elongation. Involved in the hydrolysis of peptidyl-tRNAs that have been prematurely terminated and thus in the recycling of stalled mitochondrial ribosomes. This chain is Large ribosomal subunit protein mL62, found in Homo sapiens (Human).